The chain runs to 136 residues: Endonuclease II (136 aa).

The region spanning 32-131 (KYNVIYAIAI…IKLFNPPWNI (100 aa)) is the GIY-YIG domain.

In terms of assembly, homotetramer. Requires Mg(2+) as cofactor.

It carries out the reaction Endonucleolytic nicking and cleavage of cytosine-containing double-stranded DNA.. Contributes to the degradation of host DNA, permitting the scavenging of host-derived nucleotides for phage DNA synthesis. Sequence-specific endonuclease. Catalyzes nicking of the bottom strand of double-stranded DNA between the first and second base pair to the right of a top-strand CCGC motif. Does not cleave native phage DNA, which contains 5-hydroxymethylcytosine instead of cytosine. The chain is Endonuclease II (denA) from Escherichia coli (Bacteriophage T4).